The chain runs to 116 residues: Somatostatin (116 aa).

An N-terminal signal peptide occupies residues 1 to 24 (MLSCRLQCALAALSIVLALGGVTC). Positions 25–88 (APSDPRLRQF…QDEMRLELQR (64 aa)) are excised as a propeptide. Alanine 43 is subject to Alanine amide. Residues 62–99 (QTENDALEPEDLSQAAEQDEMRLELQRSANSNPAMAPR) form a disordered region. Cysteine 105 and cysteine 116 form a disulfide bridge.

It belongs to the somatostatin family. In terms of processing, C-terminal amidation of the neuronostatin peptide is required for its biological activity, including for the regulation of mean arterial pressure.

It is found in the secreted. Its function is as follows. Inhibits the secretion of pituitary hormones, including that of growth hormone/somatotropin (GH1), PRL, ACTH, luteinizing hormone (LH) and TSH. Also impairs ghrelin- and GnRH-stimulated secretion of GH1 and LH; the inhibition of ghrelin-stimulated secretion of GH1 can be further increased by neuronostatin. May enhance low-glucose-induced glucagon release by pancreatic alpha cells. This effect may be mediated by binding to GPR107 and PKA activation. May regulate cardiac contractile function. May compromise cardiomyocyte viability. In the central nervous system, may impair memory retention and may affect hippocampal excitability. May also have anxiolytic and anorexigenic effects. May play a role in arterial pressure regulation. May inhibit basal, but not ghrelin- or GnRH-stimulated secretion of GH1 or LH, but does not affect the release of other pituitary hormones, including PRL, ACTH, FSH or TSH. Potentiates inhibitory action of somatostatin on ghrelin-stimulated secretion of GH1, but not that on GnRH-stimulated secretion of LH. This Canis lupus familiaris (Dog) protein is Somatostatin (SST).